A 158-amino-acid chain; its full sequence is NAD(P)H-quinone oxidoreductase subunit J, chloroplastic (158 aa).

It belongs to the complex I 30 kDa subunit family. In terms of assembly, NDH is composed of at least 16 different subunits, 5 of which are encoded in the nucleus.

It is found in the plastid. The protein localises to the chloroplast thylakoid membrane. It carries out the reaction a plastoquinone + NADH + (n+1) H(+)(in) = a plastoquinol + NAD(+) + n H(+)(out). It catalyses the reaction a plastoquinone + NADPH + (n+1) H(+)(in) = a plastoquinol + NADP(+) + n H(+)(out). Functionally, NDH shuttles electrons from NAD(P)H:plastoquinone, via FMN and iron-sulfur (Fe-S) centers, to quinones in the photosynthetic chain and possibly in a chloroplast respiratory chain. The immediate electron acceptor for the enzyme in this species is believed to be plastoquinone. Couples the redox reaction to proton translocation, and thus conserves the redox energy in a proton gradient. The chain is NAD(P)H-quinone oxidoreductase subunit J, chloroplastic from Draba nemorosa (Woodland whitlowgrass).